The primary structure comprises 460 residues: Ribosomal protein uS12 methylthiotransferase RimO (460 aa).

Residues 9-119 enclose the MTTase N-terminal domain; sequence PKVGFVSLGC…VMEAVHAALP (111 aa). Positions 18, 54, 83, 150, 154, and 157 each coordinate [4Fe-4S] cluster. In terms of domain architecture, Radical SAM core spans 136–374; it reads LTPRHYAYLK…AKQAEISALR (239 aa). A TRAM domain is found at 376–444; that stretch reads EAKIGSVQQC…EHDLFGDALP (69 aa).

The protein belongs to the methylthiotransferase family. RimO subfamily. [4Fe-4S] cluster serves as cofactor.

It is found in the cytoplasm. It catalyses the reaction L-aspartate(89)-[ribosomal protein uS12]-hydrogen + (sulfur carrier)-SH + AH2 + 2 S-adenosyl-L-methionine = 3-methylsulfanyl-L-aspartate(89)-[ribosomal protein uS12]-hydrogen + (sulfur carrier)-H + 5'-deoxyadenosine + L-methionine + A + S-adenosyl-L-homocysteine + 2 H(+). In terms of biological role, catalyzes the methylthiolation of an aspartic acid residue of ribosomal protein uS12. The chain is Ribosomal protein uS12 methylthiotransferase RimO from Xanthomonas oryzae pv. oryzae (strain PXO99A).